A 226-amino-acid polypeptide reads, in one-letter code: Large ribosomal subunit protein uL3 (226 aa).

A compositionally biased stretch (polar residues) spans 135–150 (MSSQRASHGNSRSHNV). The interval 135–158 (MSSQRASHGNSRSHNVPGSIGMAQ) is disordered. N5-methylglutamine is present on Gln158.

The protein belongs to the universal ribosomal protein uL3 family. As to quaternary structure, part of the 50S ribosomal subunit. Forms a cluster with proteins L14 and L19. Methylated by PrmB.

Its function is as follows. One of the primary rRNA binding proteins, it binds directly near the 3'-end of the 23S rRNA, where it nucleates assembly of the 50S subunit. The sequence is that of Large ribosomal subunit protein uL3 from Variovorax paradoxus (strain S110).